The sequence spans 167 residues: NADH-quinone oxidoreductase subunit B (167 aa).

The [4Fe-4S] cluster site is built by C48, C49, C113, and C143.

It belongs to the complex I 20 kDa subunit family. As to quaternary structure, NDH-1 is composed of 14 different subunits. Subunits NuoB, C, D, E, F, and G constitute the peripheral sector of the complex. Requires [4Fe-4S] cluster as cofactor.

The protein resides in the cell membrane. The catalysed reaction is a quinone + NADH + 5 H(+)(in) = a quinol + NAD(+) + 4 H(+)(out). NDH-1 shuttles electrons from NADH, via FMN and iron-sulfur (Fe-S) centers, to quinones in the respiratory chain. Couples the redox reaction to proton translocation (for every two electrons transferred, four hydrogen ions are translocated across the cytoplasmic membrane), and thus conserves the redox energy in a proton gradient. The sequence is that of NADH-quinone oxidoreductase subunit B from Wolbachia pipientis subsp. Culex pipiens (strain wPip).